A 244-amino-acid polypeptide reads, in one-letter code: Uridylate kinase (244 aa).

Lys-17–Gly-20 is an ATP binding site. UMP is bound at residue Gly-59. Positions 60 and 64 each coordinate ATP. UMP contacts are provided by residues Asp-79 and Thr-140–Thr-147. The ATP site is built by Thr-167, Tyr-173, and Asp-176.

It belongs to the UMP kinase family. In terms of assembly, homohexamer.

Its subcellular location is the cytoplasm. It catalyses the reaction UMP + ATP = UDP + ADP. It participates in pyrimidine metabolism; CTP biosynthesis via de novo pathway; UDP from UMP (UMPK route): step 1/1. Inhibited by UTP. Functionally, catalyzes the reversible phosphorylation of UMP to UDP. The chain is Uridylate kinase from Hahella chejuensis (strain KCTC 2396).